The primary structure comprises 481 residues: Drebrin-like protein (481 aa).

Residues 3-131 (SLDISDPDIT…DEKAITAALN (129 aa)) enclose the ADF-H domain. Positions 217 to 227 (YWKQQQAEKQK) are enriched in basic and acidic residues. The segment at 217–423 (YWKQQQAEKQ…PAEEQYDQSG (207 aa)) is disordered. Residues 228 to 237 (QQQQQQQQQA) show a composition bias toward low complexity. The segment covering 248-261 (TVGNKFQEQVSKPT) has biased composition (polar residues). A compositionally biased stretch (pro residues) spans 291–300 (PPAPSRPAAP). Residues 325 to 335 (QYEEPQYEEEQ) show a composition bias toward acidic residues. Positions 336–413 (QQQYEEQPTE…YQEEQQQYEQ (78 aa)) are enriched in low complexity. One can recognise an SH3 domain in the interval 422–481 (SGYLQAKALYDYNGENDGDLSFREGDIITILDQSDPDGWWQGSLPTGEQGFFPSNFVQQL).

This sequence belongs to the ABP1 family.

Its subcellular location is the cytoplasm. The protein resides in the cytoskeleton. It localises to the cell projection. The protein localises to the pseudopodium. Its function is as follows. Actin-binding adapter protein. Binds to F-actin but is not involved in actin polymerization, capping or bundling. Does not bind G-actin. Controls pseudopodium number and motility in early stages of chemotactic aggregation. This Dictyostelium discoideum (Social amoeba) protein is Drebrin-like protein (abpE-1).